Here is a 293-residue protein sequence, read N- to C-terminus: Nucleotide-binding protein OB2468 (293 aa).

Residue 14-21 (GMSGAGKT) coordinates ATP. 65–68 (DLRG) contributes to the GTP binding site.

The protein belongs to the RapZ-like family.

Functionally, displays ATPase and GTPase activities. This is Nucleotide-binding protein OB2468 from Oceanobacillus iheyensis (strain DSM 14371 / CIP 107618 / JCM 11309 / KCTC 3954 / HTE831).